The chain runs to 395 residues: Phosphoglycerate kinase (395 aa).

Residues 21 to 23, R36, 59 to 62, R120, and R153 each bind substrate; these read DFN and HLGR. ATP contacts are provided by residues K203, E325, and 351–354; that span reads GGDS.

It belongs to the phosphoglycerate kinase family. Monomer.

Its subcellular location is the cytoplasm. The catalysed reaction is (2R)-3-phosphoglycerate + ATP = (2R)-3-phospho-glyceroyl phosphate + ADP. It functions in the pathway carbohydrate degradation; glycolysis; pyruvate from D-glyceraldehyde 3-phosphate: step 2/5. This Roseiflexus sp. (strain RS-1) protein is Phosphoglycerate kinase.